Consider the following 119-residue polypeptide: Large ribosomal subunit protein uL18 (119 aa).

The protein belongs to the universal ribosomal protein uL18 family. As to quaternary structure, part of the 50S ribosomal subunit; part of the 5S rRNA/L5/L18/L25 subcomplex. Contacts the 5S and 23S rRNAs.

This is one of the proteins that bind and probably mediate the attachment of the 5S RNA into the large ribosomal subunit, where it forms part of the central protuberance. This is Large ribosomal subunit protein uL18 from Helicobacter pylori (strain HPAG1).